Consider the following 238-residue polypeptide: Ribosomal RNA small subunit methyltransferase G (238 aa).

S-adenosyl-L-methionine-binding positions include Gly-78, Phe-83, 129–130 (AE), and Arg-148. The interval 216-238 (EKKKETPKKYPRKAGTPAKNPIK) is disordered.

It belongs to the methyltransferase superfamily. RNA methyltransferase RsmG family.

The protein localises to the cytoplasm. In terms of biological role, specifically methylates the N7 position of a guanine in 16S rRNA. The sequence is that of Ribosomal RNA small subunit methyltransferase G from Lactococcus lactis subsp. lactis (strain IL1403) (Streptococcus lactis).